The chain runs to 423 residues: MWLDDVASELSFTQGLLLGQLSIVILIGAFIKFFIFGDPPSPDVSAALRATERRSRTLAHKRSLLTLRSSTPRHASQSLNRKRSSVLRNPAPLTTNAILSKTYYNVDSHQPESLDWFNVLIAQTIAQFRADAQHDDAILTSLTKALNGGNRPDFLDEIKVTELSLGEDFPIFSNCRVIPVDEDGITLGREGGAAGREHGRLQARMDVDLSDFITLAVETKLLLNYPKPLVAVLPVALAVSVMRFSGTLSISFVPGSPLNGSPTTLAFCFLDDYRLDLSIRSLVGSRSRLQDVPKIAQLIEARLHTWFDERCVEPRFQQIELPSLWPRKKNTRGGEDLDTGSEAGGIGRARSRDVERDLREEARKEVEAETGVRVGRSKLGVSLDVPDVGLDGGSEEGLRFRRRSRGRGDEYAMPGSMPGLSMA.

The Lumenal segment spans residues 1–15 (MWLDDVASELSFTQG). Residues 16 to 36 (LLLGQLSIVILIGAFIKFFIF) form a helical membrane-spanning segment. At 37-423 (GDPPSPDVSA…PGSMPGLSMA (387 aa)) the chain is on the cytoplasmic side. In terms of domain architecture, SMP-LTD spans 110–322 (QPESLDWFNV…EPRFQQIELP (213 aa)). 2 disordered regions span residues 327–370 (RKKN…EAET) and 394–423 (SEEGLRFRRRSRGRGDEYAMPGSMPGLSMA). Residues 350–367 (RSRDVERDLREEARKEVE) are compositionally biased toward basic and acidic residues.

This sequence belongs to the MMM1 family. Homodimer. Component of the ER-mitochondria encounter structure (ERMES) or MDM complex, composed of mmm1, mdm10, mdm12 and mdm34. A mmm1 homodimer associates with one molecule of mdm12 on each side in a pairwise head-to-tail manner, and the SMP-LTD domains of mmm1 and mdm12 generate a continuous hydrophobic tunnel for phospholipid trafficking.

The protein resides in the endoplasmic reticulum membrane. Its function is as follows. Component of the ERMES/MDM complex, which serves as a molecular tether to connect the endoplasmic reticulum (ER) and mitochondria. Components of this complex are involved in the control of mitochondrial shape and protein biogenesis, and function in nonvesicular lipid trafficking between the ER and mitochondria. The mdm12-mmm1 subcomplex functions in the major beta-barrel assembly pathway that is responsible for biogenesis of all outer membrane beta-barrel proteins, and acts in a late step after the SAM complex. The mdm10-mdm12-mmm1 subcomplex further acts in the TOM40-specific pathway after the action of the mdm12-mmm1 complex. Essential for establishing and maintaining the structure of mitochondria and maintenance of mtDNA nucleoids. The sequence is that of Maintenance of mitochondrial morphology protein 1 from Sclerotinia sclerotiorum (strain ATCC 18683 / 1980 / Ss-1) (White mold).